Reading from the N-terminus, the 296-residue chain is Ribosomal RNA small subunit methyltransferase A (296 aa).

Positions 31, 33, 58, 79, 104, and 129 each coordinate S-adenosyl-L-methionine.

This sequence belongs to the class I-like SAM-binding methyltransferase superfamily. rRNA adenine N(6)-methyltransferase family. RsmA subfamily.

The protein localises to the cytoplasm. It catalyses the reaction adenosine(1518)/adenosine(1519) in 16S rRNA + 4 S-adenosyl-L-methionine = N(6)-dimethyladenosine(1518)/N(6)-dimethyladenosine(1519) in 16S rRNA + 4 S-adenosyl-L-homocysteine + 4 H(+). In terms of biological role, specifically dimethylates two adjacent adenosines (A1518 and A1519) in the loop of a conserved hairpin near the 3'-end of 16S rRNA in the 30S particle. May play a critical role in biogenesis of 30S subunits. The protein is Ribosomal RNA small subunit methyltransferase A of Shouchella clausii (strain KSM-K16) (Alkalihalobacillus clausii).